Consider the following 390-residue polypeptide: Succinate--CoA ligase [ADP-forming] subunit beta (390 aa).

The 240-residue stretch at 9 to 248 (KDILRKFGVS…ISEEDPFEVE (240 aa)) folds into the ATP-grasp domain. ATP contacts are provided by residues Lys50, 57–59 (GRG), Glu103, Met106, and Glu111. The Mg(2+) site is built by Asn203 and Asp217. Substrate is bound by residues Asn268 and 325-327 (GIV).

The protein belongs to the succinate/malate CoA ligase beta subunit family. In terms of assembly, heterotetramer of two alpha and two beta subunits. Mg(2+) serves as cofactor.

It carries out the reaction succinate + ATP + CoA = succinyl-CoA + ADP + phosphate. The catalysed reaction is GTP + succinate + CoA = succinyl-CoA + GDP + phosphate. It participates in carbohydrate metabolism; tricarboxylic acid cycle; succinate from succinyl-CoA (ligase route): step 1/1. In terms of biological role, succinyl-CoA synthetase functions in the citric acid cycle (TCA), coupling the hydrolysis of succinyl-CoA to the synthesis of either ATP or GTP and thus represents the only step of substrate-level phosphorylation in the TCA. The beta subunit provides nucleotide specificity of the enzyme and binds the substrate succinate, while the binding sites for coenzyme A and phosphate are found in the alpha subunit. This Prosthecochloris aestuarii (strain DSM 271 / SK 413) protein is Succinate--CoA ligase [ADP-forming] subunit beta.